The chain runs to 276 residues: Homeobox-leucine zipper protein HOX11 (276 aa).

The interval 1–92 is disordered; sequence MVDGHLEAST…DDGGSARKKL (92 aa). A compositionally biased stretch (polar residues) spans 39–48; sequence LSSSPNNSAG. Positions 58-73 are enriched in gly residues; it reads HGLGGNDAAPGGGGGD. A DNA-binding region (homeobox) is located at residues 87–146; that stretch reads SARKKLRLSKEQSAFLEESFKEHSTLNPKQKLALAKQLNLRPRQVEVWFQNRRARTKLKQ. The interval 145–189 is leucine-zipper; that stretch reads KQTEVDCEYLKRCCETLTEENRRLQKELAELRALKTVHPFYMHLP. The disordered stretch occupies residues 214-244; sequence AATSSTAAPPAAPSSGGIAATSSSSAAAAAA.

The protein belongs to the HD-ZIP homeobox family. Class II subfamily. In terms of tissue distribution, expressed in stems, leaf sheaths and blades and panicles.

The protein localises to the nucleus. Its function is as follows. Probable transcription factor. The polypeptide is Homeobox-leucine zipper protein HOX11 (HOX11) (Oryza sativa subsp. indica (Rice)).